The following is a 561-amino-acid chain: Carboxylesterase 4A (561 aa).

Residues 1–20 (MRWILCWSLTLCLMAQTALG) form the signal peptide. A disulfide bond links Cys88 and Cys116. N-linked (GlcNAc...) asparagine glycosylation is present at Asn214. Residue Ser221 is the Acyl-ester intermediate of the active site. Cys273 and Cys284 are joined by a disulfide. N-linked (GlcNAc...) asparagine glycosylation is present at Asn276. Glu353 functions as the Charge relay system in the catalytic mechanism. Asn388 carries an N-linked (GlcNAc...) asparagine glycan. His467 acts as the Charge relay system in catalysis.

Belongs to the type-B carboxylesterase/lipase family.

It is found in the secreted. In terms of biological role, probable carboxylesterase. This Homo sapiens (Human) protein is Carboxylesterase 4A (CES4A).